A 422-amino-acid polypeptide reads, in one-letter code: UDP-N-acetylglucosamine 1-carboxyvinyltransferase (422 aa).

22–23 (KN) provides a ligand contact to phosphoenolpyruvate. Arginine 93 is a binding site for UDP-N-acetyl-alpha-D-glucosamine. Cysteine 117 acts as the Proton donor in catalysis. Cysteine 117 is subject to 2-(S-cysteinyl)pyruvic acid O-phosphothioketal. UDP-N-acetyl-alpha-D-glucosamine-binding positions include 122–126 (RPVDL), aspartate 308, and isoleucine 330.

Belongs to the EPSP synthase family. MurA subfamily.

The protein localises to the cytoplasm. The enzyme catalyses phosphoenolpyruvate + UDP-N-acetyl-alpha-D-glucosamine = UDP-N-acetyl-3-O-(1-carboxyvinyl)-alpha-D-glucosamine + phosphate. It functions in the pathway cell wall biogenesis; peptidoglycan biosynthesis. Cell wall formation. Adds enolpyruvyl to UDP-N-acetylglucosamine. This Legionella pneumophila (strain Paris) protein is UDP-N-acetylglucosamine 1-carboxyvinyltransferase.